A 501-amino-acid polypeptide reads, in one-letter code: Aspartate--tRNA ligase, cytoplasmic (501 aa).

T52 carries the phosphothreonine modification. Residue K74 is modified to N6-acetyllysine. Residue E229 coordinates L-aspartate. Position 249 is a phosphoserine (S249). Residues 251–254 form an aspartate region; sequence QLYK. L-aspartate is bound at residue R273. Residues 273 to 275 and 281 to 283 each bind ATP; these read RAE and RHL. K374 is modified (N6-acetyllysine). Position 424 (E424) interacts with ATP. S427 and R431 together coordinate L-aspartate. ATP is bound at residue 472–475; that stretch reads GLER.

This sequence belongs to the class-II aminoacyl-tRNA synthetase family. Type 2 subfamily. In terms of assembly, homodimer. Part of a multisubunit complex that groups tRNA ligases for Arg (RARS1), Asp (DARS1), Gln (QARS1), Ile (IARS1), Leu (LARS1), Lys (KARS1), Met (MARS1) the bifunctional ligase for Glu and Pro (EPRS1) and the auxiliary subunits AIMP1/p43, AIMP2/p38 and EEF1E1/p18.

It localises to the cytoplasm. It carries out the reaction tRNA(Asp) + L-aspartate + ATP = L-aspartyl-tRNA(Asp) + AMP + diphosphate. In terms of biological role, catalyzes the specific attachment of an amino acid to its cognate tRNA in a 2 step reaction: the amino acid (AA) is first activated by ATP to form AA-AMP and then transferred to the acceptor end of the tRNA. This chain is Aspartate--tRNA ligase, cytoplasmic (Dars1), found in Rattus norvegicus (Rat).